Reading from the N-terminus, the 70-residue chain is Small ribosomal subunit protein bS21 (70 aa).

Belongs to the bacterial ribosomal protein bS21 family.

This chain is Small ribosomal subunit protein bS21, found in Herminiimonas arsenicoxydans.